Consider the following 740-residue polypeptide: Ribosomal protein S6 kinase alpha-3 (740 aa).

The interval 1 to 38 is disordered; that stretch reads MPLAQLADPWQKMAVESPSDSAENGQQIMDEPMGEEEI. Positions 18-27 are enriched in polar residues; it reads PSDSAENGQQ. The Protein kinase 1 domain occupies 68 to 327; the sequence is FELLKVLGQG…VEEIKRHSFF (260 aa). ATP contacts are provided by residues 74-82 and lysine 100; that span reads LGQGSFGKV. Residue aspartate 193 is the Proton acceptor of the active site. Serine 227 is subject to Phosphoserine; by PDPK1. The 70-residue stretch at 328-397 folds into the AGC-kinase C-terminal domain; the sequence is STIDWNKLYR…VAITSDDESQ (70 aa). Residue threonine 365 is modified to Phosphothreonine. Phosphoserine is present on residues serine 369 and serine 375. Position 386 is a phosphoserine; by autocatalysis and MAPKAPK2 (serine 386). Serine 415 carries the phosphoserine modification. Residues 422 to 679 form the Protein kinase 2 domain; the sequence is YEVKEDIGVG…AALVLRHPWI (258 aa). ATP contacts are provided by residues 428–436 and lysine 451; that span reads IGVGSYSVC. Residue tyrosine 529 is modified to Phosphotyrosine; by FGFR3. The active-site Proton acceptor is aspartate 539. Residues serine 556 and serine 715 each carry the phosphoserine modification.

The protein belongs to the protein kinase superfamily. AGC Ser/Thr protein kinase family. S6 kinase subfamily. Forms a complex with either MAPK1/ERK2 or MAPK3/ERK1 in quiescent cells. Transiently dissociates following mitogenic stimulation. Interacts with NFATC4, ETV1/ER81 and FGFR1. The cofactor is Mg(2+). Activated by phosphorylation at Ser-227 by PDPK1. Autophosphorylated on Ser-386, as part of the activation process. May be phosphorylated at Thr-365 and Ser-369 by MAPK1/ERK2 and MAPK3/ERK1. Can also be activated via phosphorylation at Ser-386 by MAPKAPK2. Post-translationally, N-terminal myristoylation results in an activated kinase in the absence of added growth factors. Expressed in many tissues, highest levels in skeletal muscle.

It localises to the nucleus. The protein localises to the cytoplasm. It catalyses the reaction L-seryl-[protein] + ATP = O-phospho-L-seryl-[protein] + ADP + H(+). It carries out the reaction L-threonyl-[protein] + ATP = O-phospho-L-threonyl-[protein] + ADP + H(+). Its activity is regulated as follows. Upon extracellular signal or mitogen stimulation, phosphorylated at Thr-577 in the C-terminal kinase domain (CTKD) by MAPK1/ERK2 and MAPK3/ERK1. The activated CTKD then autophosphorylates Ser-386, allowing binding of PDPK1, which in turn phosphorylates Ser-227 in the N-terminal kinase domain (NTDK) leading to the full activation of the protein and subsequent phosphorylation of the substrates by the NTKD. Functionally, serine/threonine-protein kinase that acts downstream of ERK (MAPK1/ERK2 and MAPK3/ERK1) signaling and mediates mitogenic and stress-induced activation of the transcription factors CREB1, ETV1/ER81 and NR4A1/NUR77, regulates translation through RPS6 and EIF4B phosphorylation, and mediates cellular proliferation, survival, and differentiation by modulating mTOR signaling and repressing pro-apoptotic function of BAD and DAPK1. In fibroblast, is required for EGF-stimulated phosphorylation of CREB1 and histone H3 at 'Ser-10', which results in the subsequent transcriptional activation of several immediate-early genes. In response to mitogenic stimulation (EGF and PMA), phosphorylates and activates NR4A1/NUR77 and ETV1/ER81 transcription factors and the cofactor CREBBP. Upon insulin-derived signal, acts indirectly on the transcription regulation of several genes by phosphorylating GSK3B at 'Ser-9' and inhibiting its activity. Phosphorylates RPS6 in response to serum or EGF via an mTOR-independent mechanism and promotes translation initiation by facilitating assembly of the preinitiation complex. In response to insulin, phosphorylates EIF4B, enhancing EIF4B affinity for the EIF3 complex and stimulating cap-dependent translation. Is involved in the mTOR nutrient-sensing pathway by directly phosphorylating TSC2 at 'Ser-1798', which potently inhibits TSC2 ability to suppress mTOR signaling, and mediates phosphorylation of RPTOR, which regulates mTORC1 activity and may promote rapamycin-sensitive signaling independently of the PI3K/AKT pathway. Mediates cell survival by phosphorylating the pro-apoptotic proteins BAD and DAPK1 and suppressing their pro-apoptotic function. Promotes the survival of hepatic stellate cells by phosphorylating CEBPB in response to the hepatotoxin carbon tetrachloride (CCl4). Is involved in cell cycle regulation by phosphorylating the CDK inhibitor CDKN1B, which promotes CDKN1B association with 14-3-3 proteins and prevents its translocation to the nucleus and inhibition of G1 progression. In LPS-stimulated dendritic cells, is involved in TLR4-induced macropinocytosis, and in myeloma cells, acts as effector of FGFR3-mediated transformation signaling, after direct phosphorylation at Tyr-529 by FGFR3. Negatively regulates EGF-induced MAPK1/3 phosphorylation via phosphorylation of SOS1. Phosphorylates SOS1 at 'Ser-1134' and 'Ser-1161' that create YWHAB and YWHAE binding sites and which contribute to the negative regulation of MAPK1/3 phosphorylation. Phosphorylates EPHA2 at 'Ser-897', the RPS6KA-EPHA2 signaling pathway controls cell migration. Acts as a regulator of osteoblast differentiation by mediating phosphorylation of ATF4, thereby promoting ATF4 transactivation activity. The protein is Ribosomal protein S6 kinase alpha-3 (RPS6KA3) of Homo sapiens (Human).